A 434-amino-acid chain; its full sequence is Chaperone SurA (434 aa).

The signal sequence occupies residues 1 to 22 (MKPSKHLIFALFALAISQPTMA). 2 consecutive PpiC domains span residues 173–274 (DVEY…KIMD) and 283–383 (IEEV…QLEE).

Its subcellular location is the periplasm. The enzyme catalyses [protein]-peptidylproline (omega=180) = [protein]-peptidylproline (omega=0). Its function is as follows. Chaperone involved in the correct folding and assembly of outer membrane proteins. Recognizes specific patterns of aromatic residues and the orientation of their side chains, which are found more frequently in integral outer membrane proteins. May act in both early periplasmic and late outer membrane-associated steps of protein maturation. The protein is Chaperone SurA of Shewanella sp. (strain MR-4).